A 126-amino-acid chain; its full sequence is Large ribosomal subunit protein bL12 (126 aa).

This sequence belongs to the bacterial ribosomal protein bL12 family. Homodimer. Part of the ribosomal stalk of the 50S ribosomal subunit. Forms a multimeric L10(L12)X complex, where L10 forms an elongated spine to which 2 to 4 L12 dimers bind in a sequential fashion. Binds GTP-bound translation factors.

Functionally, forms part of the ribosomal stalk which helps the ribosome interact with GTP-bound translation factors. Is thus essential for accurate translation. In Legionella pneumophila (strain Paris), this protein is Large ribosomal subunit protein bL12.